The following is a 100-amino-acid chain: NADH-quinone oxidoreductase subunit K 2 (100 aa).

3 consecutive transmembrane segments (helical) span residues 4 to 24, 28 to 48, and 60 to 80; these read LWWY…GVLI, ILVV…NFIA, and IFAI…LGIL.

This sequence belongs to the complex I subunit 4L family. In terms of assembly, NDH-1 is composed of 14 different subunits. Subunits NuoA, H, J, K, L, M, N constitute the membrane sector of the complex.

It is found in the cell inner membrane. The catalysed reaction is a quinone + NADH + 5 H(+)(in) = a quinol + NAD(+) + 4 H(+)(out). Functionally, NDH-1 shuttles electrons from NADH, via FMN and iron-sulfur (Fe-S) centers, to quinones in the respiratory chain. The immediate electron acceptor for the enzyme in this species is believed to be ubiquinone. Couples the redox reaction to proton translocation (for every two electrons transferred, four hydrogen ions are translocated across the cytoplasmic membrane), and thus conserves the redox energy in a proton gradient. This chain is NADH-quinone oxidoreductase subunit K 2, found in Rhizobium etli (strain ATCC 51251 / DSM 11541 / JCM 21823 / NBRC 15573 / CFN 42).